Reading from the N-terminus, the 283-residue chain is Pantothenate synthetase (283 aa).

An ATP-binding site is contributed by 34-41 (MGALHDGH). Residue His41 is the Proton donor of the active site. Residue Gln65 coordinates (R)-pantoate. Gln65 contacts beta-alanine. 152–155 (GSKD) is a binding site for ATP. (R)-pantoate is bound at residue Gln158. ATP is bound by residues Ile181 and 189–192 (MSSR).

Belongs to the pantothenate synthetase family. In terms of assembly, homodimer.

The protein localises to the cytoplasm. The enzyme catalyses (R)-pantoate + beta-alanine + ATP = (R)-pantothenate + AMP + diphosphate + H(+). It participates in cofactor biosynthesis; (R)-pantothenate biosynthesis; (R)-pantothenate from (R)-pantoate and beta-alanine: step 1/1. Functionally, catalyzes the condensation of pantoate with beta-alanine in an ATP-dependent reaction via a pantoyl-adenylate intermediate. The chain is Pantothenate synthetase from Rhodopseudomonas palustris (strain HaA2).